The chain runs to 319 residues: Malate dehydrogenase (319 aa).

Residues 10 to 15 (GAGNIG) and aspartate 34 each bind NAD(+). Residues arginine 83 and arginine 89 each contribute to the substrate site. NAD(+)-binding positions include asparagine 96 and 119–121 (ITN). Residues asparagine 121 and arginine 152 each contribute to the substrate site. Residue histidine 176 is the Proton acceptor of the active site.

The protein belongs to the LDH/MDH superfamily. MDH type 3 family.

It carries out the reaction (S)-malate + NAD(+) = oxaloacetate + NADH + H(+). Its function is as follows. Catalyzes the reversible oxidation of malate to oxaloacetate. This is Malate dehydrogenase from Francisella tularensis subsp. holarctica (strain FTNF002-00 / FTA).